Reading from the N-terminus, the 261-residue chain is uncharacterized protein (261 aa).

Positions 1–22 (MRDSKRVVLYISIIVLSIFIIG) are cleaved as a signal peptide. Cys23 is lipidated: N-palmitoyl cysteine. A lipid anchor (S-diacylglycerol cysteine) is attached at Cys23.

It belongs to the staphylococcal tandem lipoprotein family.

It localises to the cell membrane. This is an uncharacterized protein from Staphylococcus aureus (strain Mu50 / ATCC 700699).